We begin with the raw amino-acid sequence, 162 residues long: MNKSGIILIGTILFSSMAIADDLTAPIYTTGPKPVAIGKVTFTQTPYGVLITPDLTNLPEGPHGFHLHKTADCGNHGMHAEGHYDPQNTNSHQGPYGNGHLGDLPVLYVTSNGKAMIPTLAPRLKLSDMHNLAVMIHANGDTYSDNPPQGGGGDRIACGVIK.

The N-terminal stretch at 1–20 is a signal peptide; it reads MNKSGIILIGTILFSSMAIA. The Cu cation site is built by His66, His68, and His83. The cysteines at positions 73 and 158 are disulfide-linked. Residues His83, His92, His100, and Asp103 each contribute to the Zn(2+) site. Residue His137 participates in Cu cation binding.

The protein belongs to the Cu-Zn superoxide dismutase family. In terms of assembly, homodimer. Requires Cu cation as cofactor. Zn(2+) serves as cofactor.

It localises to the periplasm. It carries out the reaction 2 superoxide + 2 H(+) = H2O2 + O2. Functionally, destroys radicals which are normally produced within the cells and which are toxic to biological systems. This chain is Superoxide dismutase [Cu-Zn] (sodC), found in Legionella pneumophila.